The chain runs to 834 residues: Protein translocase subunit SecA (834 aa).

Residues Q85, 103–107 (GEGKT), and D491 contribute to the ATP site. Residues 790–809 (RETSTNINDGEGGSHEPIKR) form a disordered region. Residues C820, C822, C831, and C832 each coordinate Zn(2+).

Belongs to the SecA family. As to quaternary structure, monomer and homodimer. Part of the essential Sec protein translocation apparatus which comprises SecA, SecYEG and auxiliary proteins SecDF. Other proteins may also be involved. Zn(2+) is required as a cofactor.

It localises to the cell membrane. Its subcellular location is the cytoplasm. It carries out the reaction ATP + H2O + cellular proteinSide 1 = ADP + phosphate + cellular proteinSide 2.. Part of the Sec protein translocase complex. Interacts with the SecYEG preprotein conducting channel. Has a central role in coupling the hydrolysis of ATP to the transfer of proteins into and across the cell membrane, serving as an ATP-driven molecular motor driving the stepwise translocation of polypeptide chains across the membrane. In Clostridium novyi (strain NT), this protein is Protein translocase subunit SecA.